We begin with the raw amino-acid sequence, 379 residues long: Chaperone protein DnaJ (379 aa).

A J domain is found at 7 to 72 (CYYETLEVER…DKRAAYDRYG (66 aa)). The CR-type zinc-finger motif lies at 135-213 (GKTAQIEIPV…CTGSGRVTKE (79 aa)). Cysteine 148, cysteine 151, cysteine 165, cysteine 168, cysteine 187, cysteine 190, cysteine 201, and cysteine 204 together coordinate Zn(2+). 4 CXXCXGXG motif repeats span residues 148-155 (CEACSGTG), 165-172 (CSTCGGAG), 187-194 (CPSCQGRG), and 201-208 (CPSCTGSG).

The protein belongs to the DnaJ family. In terms of assembly, homodimer. Zn(2+) is required as a cofactor.

It is found in the cytoplasm. Participates actively in the response to hyperosmotic and heat shock by preventing the aggregation of stress-denatured proteins and by disaggregating proteins, also in an autonomous, DnaK-independent fashion. Unfolded proteins bind initially to DnaJ; upon interaction with the DnaJ-bound protein, DnaK hydrolyzes its bound ATP, resulting in the formation of a stable complex. GrpE releases ADP from DnaK; ATP binding to DnaK triggers the release of the substrate protein, thus completing the reaction cycle. Several rounds of ATP-dependent interactions between DnaJ, DnaK and GrpE are required for fully efficient folding. Also involved, together with DnaK and GrpE, in the DNA replication of plasmids through activation of initiation proteins. The protein is Chaperone protein DnaJ of Rhodopseudomonas palustris (strain ATCC BAA-98 / CGA009).